The following is a 449-amino-acid chain: Elongation factor 1-alpha C (449 aa).

One can recognise a tr-type G domain in the interval 5–234; the sequence is KQHVSIVVIG…DACDPPKRPV (230 aa). Residues 14 to 21 form a G1 region; the sequence is GHVDSGKS. GTP is bound at residue 14–21; the sequence is GHVDSGKS. An N6,N6-dimethyllysine modification is found at lysine 55. The G2 stretch occupies residues 70 to 74; that stretch reads GITID. Residue lysine 79 is modified to N6,N6,N6-trimethyllysine. The segment at 91–94 is G3; the sequence is DAPG. Residues 91–95 and 153–156 contribute to the GTP site; these read DAPGH and NKMD. The segment at 153-156 is G4; the sequence is NKMD. Lysine 187 is modified (N6,N6,N6-trimethyllysine). Positions 194–196 are G5; it reads SGW. Lysine 265 carries the N6-methyllysine modification. An N6,N6,N6-trimethyllysine mark is found at lysine 310 and lysine 400.

The protein belongs to the TRAFAC class translation factor GTPase superfamily. Classic translation factor GTPase family. EF-Tu/EF-1A subfamily.

It is found in the cytoplasm. Functionally, this protein promotes the GTP-dependent binding of aminoacyl-tRNA to the A-site of ribosomes during protein biosynthesis. This chain is Elongation factor 1-alpha C (TEF-C), found in Porphyra purpurea (Red seaweed).